Here is a 184-residue protein sequence, read N- to C-terminus: ATP-dependent protease subunit HslV (184 aa).

Thr12 is an active-site residue. The Na(+) site is built by Ala166, Cys169, and Thr172.

Belongs to the peptidase T1B family. HslV subfamily. A double ring-shaped homohexamer of HslV is capped on each side by a ring-shaped HslU homohexamer. The assembly of the HslU/HslV complex is dependent on binding of ATP.

It is found in the cytoplasm. The catalysed reaction is ATP-dependent cleavage of peptide bonds with broad specificity.. With respect to regulation, allosterically activated by HslU binding. Protease subunit of a proteasome-like degradation complex believed to be a general protein degrading machinery. The protein is ATP-dependent protease subunit HslV of Brucella melitensis biotype 1 (strain ATCC 23456 / CCUG 17765 / NCTC 10094 / 16M).